Reading from the N-terminus, the 256-residue chain is tRNA pseudouridine synthase A (256 aa).

Residue Asp52 is the Nucleophile of the active site. Tyr110 contacts substrate.

The protein belongs to the tRNA pseudouridine synthase TruA family. Homodimer.

It carries out the reaction uridine(38/39/40) in tRNA = pseudouridine(38/39/40) in tRNA. Its function is as follows. Formation of pseudouridine at positions 38, 39 and 40 in the anticodon stem and loop of transfer RNAs. The protein is tRNA pseudouridine synthase A of Stenotrophomonas maltophilia (strain R551-3).